Reading from the N-terminus, the 141-residue chain is Hemoglobin subunit alpha-D (141 aa).

The region spanning 1–141 is the Globin domain; the sequence is MLNHDEKQLI…VSAVLAEKYR (141 aa). 2 residues coordinate heme b: H58 and H87.

Belongs to the globin family. Heterotetramer of two alpha-D chains and two beta chains. In terms of tissue distribution, red blood cells.

In terms of biological role, involved in oxygen transport from the lung to the various peripheral tissues. This chain is Hemoglobin subunit alpha-D (HBAD), found in Chrysemys picta bellii (Western painted turtle).